The sequence spans 114 residues: Cytochrome c2 (114 aa).

Q1 carries the pyrrolidone carboxylic acid modification. Heme c-binding residues include C13, C16, H17, and M93.

Belongs to the cytochrome c family. In terms of processing, binds 1 heme c group covalently per subunit.

Cytochrome c2 is found mainly in purple, non-sulfur, photosynthetic bacteria where it functions as the electron donor to the oxidized bacteriochlorophyll in the photophosphorylation pathway. However, it may also have a role in the respiratory chain and is found in some non-photosynthetic bacteria. The sequence is that of Cytochrome c2 (cycA) from Rhodopseudomonas palustris.